We begin with the raw amino-acid sequence, 950 residues long: Synaptotagmin-like protein 2 (950 aa).

A RabBD domain is found at 1-57 (MIDLSFLTEEEQDAILKVLQRDAALKRAEEERVRHLPEKIKDDQQLKNMSGQWFYEA). Disordered stretches follow at residues 78–98 (RKKLPAAAEQNKDTAMRAKES), 116–289 (VEEP…ETLR), and 361–620 (ESDQ…SSSG). Residues 87–97 (QNKDTAMRAKE) are compositionally biased toward basic and acidic residues. Composition is skewed to polar residues over residues 140 to 150 (IDMSQESTRTP) and 173 to 183 (LQQTKPEQSKT). Over residues 193–205 (KEGELSESKEKSS) the composition is skewed to basic and acidic residues. The segment covering 219–230 (QTVSTEPENASH) has biased composition (polar residues). A compositionally biased stretch (basic and acidic residues) spans 246-264 (NDLEKDDNQSFPRQRRDSL). Polar residues predominate over residues 434-445 (VESSSVINGQQE). Basic and acidic residues-rich tracts occupy residues 479 to 502 (HSFRDHRQGSEEEHSPVLKTLERR) and 531 to 544 (ELVRSAEDDQKADQ). A compositionally biased stretch (polar residues) spans 557 to 567 (TVPSLPDNQFS). A compositionally biased stretch (low complexity) spans 608–620 (SPSSLTNLSSSSG). 2 C2 domains span residues 644–769 (VKGS…LKWY) and 784–913 (NRGE…VDWM).

In terms of assembly, monomer. Binds NRXN1. Binds RAB27A that has been activated by GTP-binding. Interacts with RAB27B. In terms of processing, isoform 1 is highly susceptible to proteolytic degradation and is stabilized by the interaction with RAB27A. In terms of tissue distribution, highly expressed in brain, lung, kidney, testis and in embryos after day 7. Detected at lower levels in skeletal muscle. Expressed in pancreatic alpha cells. Isoform 6 is highly expressed in brain, but not detectable in the other tissues tested. Isoform 1 is expressed abundantly in the stomach and is predominantly localized at the apical region of gastric-surface mucus cells. Isoform 11 is expressed in cytotoxic T-lymphocytes (CTL).

Its subcellular location is the melanosome membrane. It localises to the cell membrane. In terms of biological role, isoform 11 acts as a RAB27A effector protein and plays a role in cytotoxic granule exocytosis in lymphocytes. Required for cytotoxic granule docking at the immunologic synapse. Isoform 1 may play a role in melanosome transport and vesicle trafficking. It controls melanosome distribution in the cell periphery and regulates melanocyte morphology. Isoform 1 acts as a positive mediator of mucus secretion by the surface mucus cells of the stomach. Mediates basal mucus secretion by gastric surface cells by promoting the proper granule biognesis and docking of mucus granules with the apical plasma membrane. The polypeptide is Synaptotagmin-like protein 2 (Sytl2) (Mus musculus (Mouse)).